We begin with the raw amino-acid sequence, 254 residues long: Arginine/ornithine transport ATP-binding protein AotP (254 aa).

An ABC transporter domain is found at 4–249 (LEVQDLHKRY…PQSDRLKQFL (246 aa)). 36 to 43 (GSSGSGKS) lines the ATP pocket.

This sequence belongs to the ABC transporter superfamily.

It localises to the cell inner membrane. Functionally, part of the arginine-inducible binding-protein-dependent transport system for arginine and ornithine. Probably responsible for energy coupling to the transport system. The chain is Arginine/ornithine transport ATP-binding protein AotP (aotP) from Pseudomonas aeruginosa (strain ATCC 15692 / DSM 22644 / CIP 104116 / JCM 14847 / LMG 12228 / 1C / PRS 101 / PAO1).